Consider the following 72-residue polypeptide: DNA gyrase inhibitor YacG (72 aa).

Zn(2+) contacts are provided by Cys-14, Cys-17, Cys-33, and Cys-37.

The protein belongs to the DNA gyrase inhibitor YacG family. As to quaternary structure, interacts with GyrB. Zn(2+) serves as cofactor.

In terms of biological role, inhibits all the catalytic activities of DNA gyrase by preventing its interaction with DNA. Acts by binding directly to the C-terminal domain of GyrB, which probably disrupts DNA binding by the gyrase. In Mannheimia succiniciproducens (strain KCTC 0769BP / MBEL55E), this protein is DNA gyrase inhibitor YacG.